The sequence spans 140 residues: Small ribosomal subunit protein uS19 (140 aa).

This sequence belongs to the universal ribosomal protein uS19 family.

In terms of biological role, protein S19 forms a complex with S13 that binds strongly to the 16S ribosomal RNA. This is Small ribosomal subunit protein uS19 (rps19) from Sulfurisphaera tokodaii (strain DSM 16993 / JCM 10545 / NBRC 100140 / 7) (Sulfolobus tokodaii).